Consider the following 143-residue polypeptide: Nucleoside diphosphate kinase (143 aa).

Residues K11, F59, R87, T93, R104, and N114 each contribute to the ATP site. H117 serves as the catalytic Pros-phosphohistidine intermediate.

It belongs to the NDK family. In terms of assembly, homotetramer. The cofactor is Mg(2+).

It localises to the cytoplasm. The catalysed reaction is a 2'-deoxyribonucleoside 5'-diphosphate + ATP = a 2'-deoxyribonucleoside 5'-triphosphate + ADP. It catalyses the reaction a ribonucleoside 5'-diphosphate + ATP = a ribonucleoside 5'-triphosphate + ADP. In terms of biological role, major role in the synthesis of nucleoside triphosphates other than ATP. The ATP gamma phosphate is transferred to the NDP beta phosphate via a ping-pong mechanism, using a phosphorylated active-site intermediate. In Salmonella agona (strain SL483), this protein is Nucleoside diphosphate kinase.